We begin with the raw amino-acid sequence, 162 residues long: Phosphopantetheine adenylyltransferase (162 aa).

S11 lines the substrate pocket. Residues S11–F12 and H19 each bind ATP. Substrate is bound by residues K43, V76, and R90. Residues G91–R93, E101, and L126–S132 contribute to the ATP site.

This sequence belongs to the bacterial CoaD family. In terms of assembly, homohexamer. Mg(2+) is required as a cofactor.

Its subcellular location is the cytoplasm. It catalyses the reaction (R)-4'-phosphopantetheine + ATP + H(+) = 3'-dephospho-CoA + diphosphate. It functions in the pathway cofactor biosynthesis; coenzyme A biosynthesis; CoA from (R)-pantothenate: step 4/5. Functionally, reversibly transfers an adenylyl group from ATP to 4'-phosphopantetheine, yielding dephospho-CoA (dPCoA) and pyrophosphate. The chain is Phosphopantetheine adenylyltransferase from Streptococcus suis (strain 05ZYH33).